The chain runs to 307 residues: Predicted GPI-anchored protein 44 (307 aa).

The signal sequence occupies residues 1-22; sequence MLSTNNLLILLIFSFLITNVKS. N-linked (GlcNAc...) asparagine glycans are attached at residues Asn-146 and Asn-217. Positions 232–261 are disordered; that stretch reads TPQPLLETPSQESSAPNIDSTTPTTIDNTV. Polar residues predominate over residues 239–254; sequence TPSQESSAPNIDSTTP. Gly-286 carries the GPI-anchor amidated glycine lipid modification. Residues 287-307 constitute a propeptide, removed in mature form; sequence GAMGYPSISVALGLVFIAYLV.

The protein localises to the cell membrane. This chain is Predicted GPI-anchored protein 44 (PGA44), found in Candida albicans (strain SC5314 / ATCC MYA-2876) (Yeast).